Reading from the N-terminus, the 3072-residue chain is Eukaryotic translation initiation factor 2-alpha kinase PK4 (3072 aa).

At 1-106 (MCNFIKKGIR…EFRWLINKLE (106 aa)) the chain is on the cytoplasmic side. Residues 107–127 (IIYFYFFCHLLLLCIFQNIFL) form a helical membrane-spanning segment. At 128–1643 (LTYMSKEYFL…FTSIRYKRRR (1516 aa)) the chain is on the lumenal side. Residues 383–402 (KEKCHRDEKCDRGENYDRGE) form a disordered region. The tract at residues 576-610 (KKKILDENDMITIDNNIDKKENILFPYFHMEILKD) is 10 X 7 AA tandem repeat of D-K-N-[GE]-L-D-[GD]. The interval 970-1010 (QYEDNNDNDNNKNDNNKNDNNKNDNNKNDNNNNNNNNNNNS) is disordered. Over residues 978–996 (DNNKNDNNKNDNNKNDNNK) the composition is skewed to basic and acidic residues. Low complexity predominate over residues 997-1009 (NDNNNNNNNNNNN). The helical transmembrane segment at 1644 to 1664 (WYWRVFYTIMFIIFFPVLFIY) threads the bilayer. The Cytoplasmic segment spans residues 1665–3072 (RRIIKRRKGS…IKNENNGADK (1408 aa)). 2 disordered regions span residues 1737-1766 (KNYN…SKSN) and 1917-1937 (KVGS…KDKK). Over residues 1738–1766 (NYNNNNNNNNNKNNNNISNNNSNSNSKSN) the composition is skewed to low complexity. Positions 1928–1937 (NYTDNEKDKK) are enriched in basic and acidic residues. ATP contacts are provided by residues 2152-2160 (IGQGGFGSV) and lysine 2177. Disordered regions lie at residues 2316 to 2402 (FYSD…EGRD), 2479 to 2558 (RNED…KKLD), and 2691 to 2749 (ENDD…DDDI). Residues 2326-2335 (KNKENPEKNH) are compositionally biased toward basic and acidic residues. The segment covering 2362–2384 (HKLKKRKNKKKKSKKKRKSKSKI) has biased composition (basic residues). A run of 10 repeats spans residues 2483–2489 (DKNGLDG), 2490–2496 (DKNGLDG), 2497–2503 (DKNGLDG), 2504–2510 (DKNGLDG), 2511–2517 (DKNGLDG), 2518–2524 (DKNELDG), 2525–2531 (DKNGLDG), 2532–2538 (DKNGLDG), 2539–2545 (DKNGLDG), and 2546–2552 (DKNELDD). Residues 2627–2998 (TNVESINTNG…KIKVLLDPHL (372 aa)) enclose the Protein kinase domain. Positions 2692-2702 (NDDDDDDDDDN) are enriched in acidic residues. Residue aspartate 2835 is the Proton acceptor of the active site. A Phosphothreonine modification is found at threonine 2902.

It belongs to the protein kinase superfamily. Ser/Thr protein kinase family. GCN2 subfamily. In terms of assembly, may form oligomers in response to stress; oligomerization may result in catalytic activity. Interacts with BIP; the interaction is disrupted in response to stress. Auto-phosphorylated.

The protein resides in the endoplasmic reticulum membrane. It catalyses the reaction L-seryl-[protein] + ATP = O-phospho-L-seryl-[protein] + ADP + H(+). It carries out the reaction L-threonyl-[protein] + ATP = O-phospho-L-threonyl-[protein] + ADP + H(+). With respect to regulation, dissociation from BIP and oligomerization, may results autophosphorylation and kinase activity induction. Functionally, during the asexual blood stage, phosphorylates translation factor eIF2alpha in late schizonts resulting in protein translation inhibition. Plays a role in trophozoite differentiation into schizonts. The protein is Eukaryotic translation initiation factor 2-alpha kinase PK4 of Plasmodium falciparum (isolate 3D7).